A 683-amino-acid chain; its full sequence is Translation initiation factor IF-2 (683 aa).

The region spanning 182 to 351 (KRPPVVTVMG…ILTAEMEELK (170 aa)) is the tr-type G domain. A G1 region spans residues 191 to 198 (GHVDHGKT). Position 191–198 (191–198 (GHVDHGKT)) interacts with GTP. Residues 216–220 (GITQH) form a G2 region. The G3 stretch occupies residues 237–240 (DTPG). Residues 237–241 (DTPGH) and 291–294 (NKID) contribute to the GTP site. The G4 stretch occupies residues 291 to 294 (NKID). The interval 327–329 (SAH) is G5.

Belongs to the TRAFAC class translation factor GTPase superfamily. Classic translation factor GTPase family. IF-2 subfamily.

The protein localises to the cytoplasm. In terms of biological role, one of the essential components for the initiation of protein synthesis. Protects formylmethionyl-tRNA from spontaneous hydrolysis and promotes its binding to the 30S ribosomal subunits. Also involved in the hydrolysis of GTP during the formation of the 70S ribosomal complex. The protein is Translation initiation factor IF-2 of Clostridium novyi (strain NT).